We begin with the raw amino-acid sequence, 341 residues long: S-adenosylmethionine:tRNA ribosyltransferase-isomerase (341 aa).

This sequence belongs to the QueA family. Monomer.

It is found in the cytoplasm. The enzyme catalyses 7-aminomethyl-7-carbaguanosine(34) in tRNA + S-adenosyl-L-methionine = epoxyqueuosine(34) in tRNA + adenine + L-methionine + 2 H(+). The protein operates within tRNA modification; tRNA-queuosine biosynthesis. In terms of biological role, transfers and isomerizes the ribose moiety from AdoMet to the 7-aminomethyl group of 7-deazaguanine (preQ1-tRNA) to give epoxyqueuosine (oQ-tRNA). This is S-adenosylmethionine:tRNA ribosyltransferase-isomerase from Clostridium botulinum (strain Loch Maree / Type A3).